The chain runs to 416 residues: Phosphatidylinositol 5-phosphate 4-kinase type-2 beta (416 aa).

Serine 2 carries the post-translational modification N-acetylserine. A Phosphothreonine modification is found at threonine 8. Serine 19 is subject to Phosphoserine. A PIPK domain is found at 38-415 (ASEPILSVLM…RFNEFMSNIL (378 aa)). The tract at residues 64–70 (VMLMPDD) is required for interaction with PIP5K1A. Residues lysine 94 and lysine 150 each carry the N6-acetyllysine modification. ATP-binding positions include 202–204 (RNV) and lysine 214. Residues 203–204 (NV) and lysine 214 contribute to the GTP site. At threonine 322 the chain carries Phosphothreonine. At serine 326 the chain carries Phosphoserine. Aspartate 369 lines the GTP pocket.

In terms of assembly, homodimer. Binds TNFRSF1A. Interacts with PIP4K2A; the interaction suppresses ubiquitination by the SPOP/CUL3 complex. In terms of processing, ubiquitinated by the SPOP/CUL3 complex. Ubiquitination is stimulated by PtdIns5P levels. Post-translationally, phosphorylated on serine residues. Highly expressed in brain, heart, pancreas, skeletal muscle and kidney. Detected at lower levels in placenta, lung and liver.

Its subcellular location is the endoplasmic reticulum membrane. The protein localises to the cell membrane. It localises to the nucleus. It is found in the cytoplasm. The enzyme catalyses a 1,2-diacyl-sn-glycero-3-phospho-(1D-myo-inositol-5-phosphate) + ATP = a 1,2-diacyl-sn-glycero-3-phospho-(1D-myo-inositol-4,5-bisphosphate) + ADP + H(+). It carries out the reaction 1,2-dihexadecanoyl-sn-glycero-3-phospho-(1D-myo-inositol-5-phosphate) + ATP = 1,2-dihexadecanoyl-sn-glycero-3-phospho-(1D-myo-inositol-4,5-bisphosphate) + ADP + H(+). The catalysed reaction is 1,2-dihexadecanoyl-sn-glycero-3-phospho-(1D-myo-inositol-5-phosphate) + GTP = 1,2-dihexadecanoyl-sn-glycero-3-phospho-(1D-myo-inositol-4,5-bisphosphate) + GDP + H(+). Functionally, participates in the biosynthesis of phosphatidylinositol 4,5-bisphosphate. Preferentially utilizes GTP, rather than ATP, for PI(5)P phosphorylation and its activity reflects changes in direct proportion to the physiological GTP concentration. Its GTP-sensing activity is critical for metabolic adaptation. PIP4Ks negatively regulate insulin signaling through a catalytic-independent mechanism. They interact with PIP5Ks and suppress PIP5K-mediated PtdIns(4,5)P2 synthesis and insulin-dependent conversion to PtdIns(3,4,5)P3. This Homo sapiens (Human) protein is Phosphatidylinositol 5-phosphate 4-kinase type-2 beta.